Here is a 78-residue protein sequence, read N- to C-terminus: U23-theraphotoxin-Cg1a 1 (78 aa).

An N-terminal signal peptide occupies residues 1 to 21 (MKTSVLVTVLGLAVISVLCSA). Positions 22–49 (SQDEEQDMYDELLSAVFEVNDELQSEAR) are excised as a propeptide. Disulfide bonds link Cys50-Cys64, Cys57-Cys69, and Cys63-Cys75.

The protein belongs to the neurotoxin 10 (Hwtx-1) family. 64 (Jztx-20) subfamily. As to expression, expressed by the venom gland.

The protein localises to the secreted. Functionally, probable ion channel inhibitor. This is U23-theraphotoxin-Cg1a 1 from Chilobrachys guangxiensis (Chinese earth tiger tarantula).